A 303-amino-acid chain; its full sequence is Putative 1-phosphofructokinase (303 aa).

ATP is bound by residues 217 to 222 and 249 to 250; these read SDGDKG and GD. The Proton acceptor role is filled by aspartate 250.

The protein belongs to the carbohydrate kinase PfkB family.

It catalyses the reaction beta-D-fructose 1-phosphate + ATP = beta-D-fructose 1,6-bisphosphate + ADP + H(+). Its function is as follows. Catalyzes the ATP-dependent phosphorylation of fructose-l-phosphate to fructose-l,6-bisphosphate. This Mycoplasma genitalium (strain ATCC 33530 / DSM 19775 / NCTC 10195 / G37) (Mycoplasmoides genitalium) protein is Putative 1-phosphofructokinase (fruK).